The primary structure comprises 337 residues: tRNA-cytidine(32) 2-sulfurtransferase (337 aa).

The PP-loop motif signature appears at 71–76 (SGGKDS). Positions 146, 149, and 237 each coordinate [4Fe-4S] cluster.

It belongs to the TtcA family. In terms of assembly, homodimer. The cofactor is Mg(2+). [4Fe-4S] cluster is required as a cofactor.

It is found in the cytoplasm. The catalysed reaction is cytidine(32) in tRNA + S-sulfanyl-L-cysteinyl-[cysteine desulfurase] + AH2 + ATP = 2-thiocytidine(32) in tRNA + L-cysteinyl-[cysteine desulfurase] + A + AMP + diphosphate + H(+). It functions in the pathway tRNA modification. Catalyzes the ATP-dependent 2-thiolation of cytidine in position 32 of tRNA, to form 2-thiocytidine (s(2)C32). The sulfur atoms are provided by the cysteine/cysteine desulfurase (IscS) system. This is tRNA-cytidine(32) 2-sulfurtransferase from Burkholderia vietnamiensis (strain G4 / LMG 22486) (Burkholderia cepacia (strain R1808)).